The primary structure comprises 153 residues: MKIGIADTTFSRINMGKIAIDELRKISSIPYERYTVPGIKDLPIAAKKLLEEKGCDIVITLGWVGGTQKDMLSYIVLSMGLVIVQLMTNKHVIDVTIHEDEAEDEKTLMMVAENRVREHVRNAVDLLVNPKRLQKLAGTGQRQGYPDVGPILK.

The protein belongs to the DMRL synthase family.

The catalysed reaction is 2 6,7-dimethyl-8-(1-D-ribityl)lumazine + H(+) = 5-amino-6-(D-ribitylamino)uracil + riboflavin. It participates in cofactor biosynthesis; riboflavin biosynthesis; riboflavin from 2-hydroxy-3-oxobutyl phosphate and 5-amino-6-(D-ribitylamino)uracil: step 2/2. The protein is Riboflavin synthase (ribC) of Archaeoglobus fulgidus (strain ATCC 49558 / DSM 4304 / JCM 9628 / NBRC 100126 / VC-16).